The following is a 90-amino-acid chain: Neurotoxin LmNaTx19 (90 aa).

The first 19 residues, 1-19, serve as a signal peptide directing secretion; sequence MNHLILIVAMCLMVIGVQC. In terms of domain architecture, LCN-type CS-alpha/beta spans 21-80; the sequence is KDGYLYDDVDCKFSCWDNEYCRKLCKSKKAVGGYCWRWRFSCYCTGLPDNEKTEGTYKCG. Cystine bridges form between Cys31–Cys79, Cys35–Cys55, Cys41–Cys62, and Cys45–Cys64.

The protein belongs to the long (4 C-C) scorpion toxin superfamily. Sodium channel inhibitor family. Alpha subfamily. In terms of tissue distribution, expressed by the venom gland.

The protein localises to the secreted. In terms of biological role, binds voltage-independently at site-3 of voltage-gated sodium channels (Nav) and inhibits the inactivation of the activated channels, thereby blocking neuronal transmission. The protein is Neurotoxin LmNaTx19 of Lychas mucronatus (Chinese swimming scorpion).